Consider the following 203-residue polypeptide: Translation machinery-associated protein 16 (203 aa).

Residues 1-40 form a disordered region; it reads MPKAPKGKSVGQEKKVIHPYSRKAAQITRKAHKQEKKEEL. Ser9 bears the ADP-ribosylserine mark.

This sequence belongs to the TMA16 family. In terms of assembly, associates with pre-60S ribosomal particles.

Its subcellular location is the nucleus. Involved in the biogenesis of the 60S ribosomal subunit in the nucleus. This Bos taurus (Bovine) protein is Translation machinery-associated protein 16 (TMA16).